Reading from the N-terminus, the 376-residue chain is 23S rRNA (uracil(747)-C(5))-methyltransferase RlmC (376 aa).

4 residues coordinate [4Fe-4S] cluster: Cys3, Cys11, Cys14, and Cys87. 4 residues coordinate S-adenosyl-L-methionine: Gln212, Phe241, Glu262, and Asn307. The active-site Nucleophile is Cys334.

The protein belongs to the class I-like SAM-binding methyltransferase superfamily. RNA M5U methyltransferase family. RlmC subfamily.

It catalyses the reaction uridine(747) in 23S rRNA + S-adenosyl-L-methionine = 5-methyluridine(747) in 23S rRNA + S-adenosyl-L-homocysteine + H(+). Catalyzes the formation of 5-methyl-uridine at position 747 (m5U747) in 23S rRNA. The polypeptide is 23S rRNA (uracil(747)-C(5))-methyltransferase RlmC (Pectobacterium carotovorum subsp. carotovorum (strain PC1)).